Here is a 494-residue protein sequence, read N- to C-terminus: Glutamate decarboxylase 2 (494 aa).

Lys-276 carries the N6-(pyridoxal phosphate)lysine modification. The segment at 463–494 is calmodulin-binding; sequence VKEKKMEKEILMEVIVGWRKFVKERKKMNGVC.

The protein belongs to the group II decarboxylase family. As to quaternary structure, homohexamer. Interacts with calmodulin. It depends on pyridoxal 5'-phosphate as a cofactor. Expressed in roots, inflorescence stems, flowers, siliques and leaves.

The catalysed reaction is L-glutamate + H(+) = 4-aminobutanoate + CO2. Its activity is regulated as follows. Up-regulated by calmodulin binding at physiological pH. Its function is as follows. Catalyzes the conversion of glutamate to 4-aminobutanoate (GABA). The calmodulin-binding is calcium-dependent and it is proposed to directly or indirectly form a calcium regulated control of GABA biosynthesis. In Arabidopsis thaliana (Mouse-ear cress), this protein is Glutamate decarboxylase 2 (GAD2).